A 217-amino-acid chain; its full sequence is E3 ubiquitin-protein ligase znrf2 (217 aa).

Disordered regions lie at residues 1 to 27 and 63 to 111; these read MGAK…SATA and QFIS…ERST. Glycine 2 carries the N-myristoyl glycine lipid modification. The span at 68 to 100 shows a compositional bias: polar residues; it reads RTRSVGPSARPQSGINIPNSGAYSSADSGNSTP. Residues 174-215 form an RING-type; atypical zinc finger; sequence CAICLEELLQGDTIARLPCLCIYHKGCIDEWFEVNRSCPEHP.

The protein resides in the endosome membrane. It localises to the lysosome membrane. It is found in the presynaptic cell membrane. It catalyses the reaction S-ubiquitinyl-[E2 ubiquitin-conjugating enzyme]-L-cysteine + [acceptor protein]-L-lysine = [E2 ubiquitin-conjugating enzyme]-L-cysteine + N(6)-ubiquitinyl-[acceptor protein]-L-lysine.. Its pathway is protein modification; protein ubiquitination. May play a role in the establishment and maintenance of neuronal transmission and plasticity via its ubiquitin ligase activity. E3 ubiquitin ligases accept ubiquitin from an E2 ubiquitin-conjugating enzyme in the form of a thioester and then directly transfer the ubiquitin to targeted substrates. In Danio rerio (Zebrafish), this protein is E3 ubiquitin-protein ligase znrf2 (znrf2).